A 396-amino-acid polypeptide reads, in one-letter code: Mevalonate kinase (396 aa).

ATP is bound by residues Lys-13, Asn-55, Ser-135, and 140–146 (GAGLGSS). Ser-146 serves as the catalytic Proton donor. Mg(2+) contacts are provided by Ser-146 and Glu-193. The active-site Proton acceptor is Asp-204.

It belongs to the GHMP kinase family. Mevalonate kinase subfamily. In terms of assembly, homodimer. Requires Mg(2+) as cofactor.

The protein resides in the cytoplasm. It localises to the peroxisome. It carries out the reaction (R)-mevalonate + ATP = (R)-5-phosphomevalonate + ADP + H(+). It participates in isoprenoid biosynthesis; isopentenyl diphosphate biosynthesis via mevalonate pathway; isopentenyl diphosphate from (R)-mevalonate: step 1/3. With respect to regulation, farnesyl pyrophosphate and geranyl pyrophosphate inhibit mevalonate kinase activity by binding competitively at the ATP-binding sites. Functionally, catalyzes the phosphorylation of mevalonate to mevalonate 5-phosphate, a key step in isoprenoid and cholesterol biosynthesis. The protein is Mevalonate kinase of Bos taurus (Bovine).